A 401-amino-acid chain; its full sequence is Phosphoglycerate kinase (401 aa).

Substrate-binding positions include 21–23 (DFN), Arg36, 59–62 (HLGR), Arg119, and Arg160. Residues Lys212, Glu330, and 357 to 360 (GGDS) contribute to the ATP site.

This sequence belongs to the phosphoglycerate kinase family. As to quaternary structure, monomer.

It localises to the cytoplasm. It catalyses the reaction (2R)-3-phosphoglycerate + ATP = (2R)-3-phospho-glyceroyl phosphate + ADP. It functions in the pathway carbohydrate degradation; glycolysis; pyruvate from D-glyceraldehyde 3-phosphate: step 2/5. This chain is Phosphoglycerate kinase, found in Limosilactobacillus reuteri subsp. reuteri (strain JCM 1112) (Lactobacillus reuteri).